The sequence spans 401 residues: Phosphoglycerate kinase (401 aa).

Residues 29–31, R45, 69–72, R125, and R158 each bind substrate; these read DFN and HLGR. ATP-binding positions include K209, E331, and 357–360; that span reads GGDT.

Belongs to the phosphoglycerate kinase family. Monomer.

It is found in the cytoplasm. The enzyme catalyses (2R)-3-phosphoglycerate + ATP = (2R)-3-phospho-glyceroyl phosphate + ADP. It functions in the pathway carbohydrate degradation; glycolysis; pyruvate from D-glyceraldehyde 3-phosphate: step 2/5. This Wolinella succinogenes (strain ATCC 29543 / DSM 1740 / CCUG 13145 / JCM 31913 / LMG 7466 / NCTC 11488 / FDC 602W) (Vibrio succinogenes) protein is Phosphoglycerate kinase.